Reading from the N-terminus, the 182-residue chain is Pyruvate synthase subunit PorC (182 aa).

As to quaternary structure, heterotetramer of one alpha, one beta, one delta and one gamma chain.

It catalyses the reaction 2 oxidized [2Fe-2S]-[ferredoxin] + pyruvate + CoA = 2 reduced [2Fe-2S]-[ferredoxin] + acetyl-CoA + CO2 + H(+). The chain is Pyruvate synthase subunit PorC (porC) from Methanosarcina barkeri (strain Fusaro / DSM 804).